The primary structure comprises 105 residues: Antimicrobial peptide 1 (105 aa).

Positions 1-26 (METKRLAYVMFVLVCLFLAMAQPSQA) are cleaved as a signal peptide. Cystine bridges form between Cys37/Cys93, Cys47/Cys105, and Cys49/Cys77.

In terms of tissue distribution, detected at higher levels in needles and twigs from canker-resistant seedlings than in needles from canker-susceptible plants. During summer, detected on cankered, healthy and marginal bark. During winter, detected at lower levels in cankered bark and bark from the canker margin than in healthy bark (at protein level).

The protein localises to the secreted. It is found in the cell wall. Its function is as follows. Antimicrobial peptide. The protein is Antimicrobial peptide 1 of Pinus monticola (Western white pine).